A 363-amino-acid polypeptide reads, in one-letter code: 2,5-diketocamphane 1,2-monooxygenase 1 (363 aa).

Residues methionine 74 and 186–194 (TGLTKNSSS) each bind FMN.

Belongs to the bacterial luciferase oxidoreductase family. Homodimer. Likely forms a loose transient complex with a P.putida flavin reductase that provides the required FMNH(2) to the enzyme.

The enzyme catalyses (1R,4R)-bornane-2,5-dione + FMNH2 + O2 = (1R,4R)-5-oxo-1,2-campholide + FMN + H2O + H(+). It functions in the pathway terpene metabolism; (R)-camphor degradation. In terms of biological role, involved in the degradation and assimilation of (+)-camphor, which allows P.putida strain NCIMB 10007 to grow on this enantiomer of camphor as the sole carbon source. Catalyzes the FMNH(2)-dependent lactonization of 2,5-diketocamphane via a Baeyer-Villiger oxidation to produce the unstable lactone 5-oxo-1,2-campholide with (R,R) configuration, that presumably undergoes spontaneous hydrolysis to form 2-oxo-Delta(3)-4,5,5-trimethylcyclopentenylacetate. Is also able to convert (+)-camphor and norcamphor to the corresponding lactone in vitro. Shows no conversion of (-)-camphor, (+)-fenchone, (-)-fenchone, and (+)-nopinone. Acts only on bicyclic ketones; is not active towards monocyclic ketones, aromatic ketones, the aliphatic 2-decanone, 1-indanone and progesterone. The chain is 2,5-diketocamphane 1,2-monooxygenase 1 from Pseudomonas putida (Arthrobacter siderocapsulatus).